Consider the following 388-residue polypeptide: Alanine racemase 3 (388 aa).

The Proton acceptor; specific for D-alanine role is filled by Lys41. Position 41 is an N6-(pyridoxal phosphate)lysine (Lys41). Arg135 is a binding site for substrate. The active-site Proton acceptor; specific for L-alanine is the Tyr256. Met304 serves as a coordination point for substrate.

It belongs to the alanine racemase family. Requires pyridoxal 5'-phosphate as cofactor.

It catalyses the reaction L-alanine = D-alanine. Its pathway is amino-acid biosynthesis; D-alanine biosynthesis; D-alanine from L-alanine: step 1/1. Catalyzes the interconversion of L-alanine and D-alanine. May also act on other amino acids. The sequence is that of Alanine racemase 3 (alr3) from Mesorhizobium japonicum (strain LMG 29417 / CECT 9101 / MAFF 303099) (Mesorhizobium loti (strain MAFF 303099)).